Consider the following 27-residue polypeptide: Caerulein precursor fragment R1 (27 aa).

As to expression, expressed by the skin glands.

It is found in the secreted. Its function is as follows. Antimicrobial peptide. The sequence is that of Caerulein precursor fragment R1 from Xenopus ruwenzoriensis (Uganda clawed frog).